Here is a 265-residue protein sequence, read N- to C-terminus: Bidirectional sugar transporter SWEET7b (265 aa).

Residues 1-9 lie on the Extracellular side of the membrane; sequence MVSPDLIRN. A helical membrane pass occupies residues 10-30; the sequence is MVGIVGNIISFGLFLSPVPTF. The region spanning 10 to 97 is the MtN3/slv 1 domain; the sequence is MVGIVGNIIS…TIFFLFSDKK (88 aa). The Cytoplasmic portion of the chain corresponds to 31-45; that stretch reads YRIIKNKDVQDFKAD. A helical membrane pass occupies residues 46-66; sequence PYLATLLNCMLWVFYGLPIVH. Residues 67-69 lie on the Extracellular side of the membrane; it reads PNS. Residues 70–90 traverse the membrane as a helical segment; sequence ILVVTINGIGLVIEAVYLTIF. The Cytoplasmic portion of the chain corresponds to 91-101; sequence FLFSDKKNKKK. A helical transmembrane segment spans residues 102-122; it reads MGVVLATEALFMAAVVLGVLL. The Extracellular segment spans residues 123–131; that stretch reads GAHTHQRRS. The helical transmembrane segment at 132–152 threads the bilayer; the sequence is LIVGILCVIFGTIMYSSPLTI. Positions 133–215 constitute a MtN3/slv 2 domain; it reads IVGILCVIFG…QLILYAIYYR (83 aa). The Cytoplasmic segment spans residues 153-165; it reads MSQVVKTKSVEYM. The chain crosses the membrane as a helical span at residues 166–186; the sequence is PLLLSVVSFLNGLCWTSYALI. The Extracellular segment spans residues 187 to 189; it reads RLD. The helical transmembrane segment at 190 to 210 threads the bilayer; the sequence is IFITIPNGLGVLFALMQLILY. The Cytoplasmic portion of the chain corresponds to 211–265; that stretch reads AIYYRTIPKKQDKNLELPTVAPVAKDTSIVTPVSKDDDVDGGNASHVTINITIEL.

This sequence belongs to the SWEET sugar transporter family. Forms homooligomers and/or heterooligomers.

It localises to the cell membrane. Mediates both low-affinity uptake and efflux of sugar across the plasma membrane. The protein is Bidirectional sugar transporter SWEET7b (SWEET7B) of Oryza sativa subsp. japonica (Rice).